A 93-amino-acid polypeptide reads, in one-letter code: Small ribosomal subunit protein uS19 (93 aa).

This sequence belongs to the universal ribosomal protein uS19 family.

Functionally, protein S19 forms a complex with S13 that binds strongly to the 16S ribosomal RNA. This chain is Small ribosomal subunit protein uS19, found in Renibacterium salmoninarum (strain ATCC 33209 / DSM 20767 / JCM 11484 / NBRC 15589 / NCIMB 2235).